The primary structure comprises 140 residues: Cytochrome c-type biogenesis protein CcmE (140 aa).

At 1–7 (MKRKHKR) the chain is on the cytoplasmic side. The helical; Signal-anchor for type II membrane protein transmembrane segment at 8-28 (LLFVLASFCAAGCALLFILSE) threads the bilayer. The Periplasmic segment spans residues 29 to 140 (LRESVSFFYT…TIPKALPEPK (112 aa)). Heme contacts are provided by H121 and Y125.

Belongs to the CcmE/CycJ family.

The protein localises to the cell inner membrane. In terms of biological role, heme chaperone required for the biogenesis of c-type cytochromes. Transiently binds heme delivered by CcmC and transfers the heme to apo-cytochromes in a process facilitated by CcmF and CcmH. In Anaplasma marginale (strain Florida), this protein is Cytochrome c-type biogenesis protein CcmE.